Consider the following 334-residue polypeptide: Broad-range acid phosphatase DET1 (334 aa).

The Tele-phosphohistidine intermediate role is filled by H32. Substrate is bound by residues N38, 44–45 (NG), and R108. The Proton donor/acceptor role is filled by E126. Substrate-binding positions include 168–171 (LNNT) and 195–205 (RVKDEPRIREQ). S248 carries the phosphoserine modification.

This sequence belongs to the phosphoglycerate mutase family.

Its subcellular location is the cytoplasm. The protein resides in the nucleus. In terms of biological role, metal-independent, broad-range acid phosphatase. Involved, either directly or indirectly, in the bidirectional transport of sterols between the endoplasmic reticulum and the plasma membrane. The sequence is that of Broad-range acid phosphatase DET1 (DET1) from Saccharomyces cerevisiae (strain ATCC 204508 / S288c) (Baker's yeast).